We begin with the raw amino-acid sequence, 318 residues long: Ubiquinol oxidase (318 aa).

The chain crosses the membrane as a helical span at residues 150–170; that stretch reads VVVLETVAAIPGMVGGMFRHL. Fe cation-binding residues include glutamate 154, glutamate 193, and histidine 196. Residues 212–232 form a helical membrane-spanning segment; sequence MLIKLGQFLFFNGYMVFYFVA. Residues glutamate 244, glutamate 295, and histidine 298 each coordinate Fe cation.

Belongs to the alternative oxidase family. Found as monomers and homodimers. Fe cation is required as a cofactor.

The protein resides in the mitosome membrane. It catalyses the reaction 2 a ubiquinol + O2 = 2 a ubiquinone + 2 H2O. Its function is as follows. Alternative oxidase which function may be to reoxidize reducing equivalents produced by glycolysis such as ubiquinol. The polypeptide is Ubiquinol oxidase (AOX) (Trachipleistophora hominis (Microsporidian parasite)).